The following is a 301-amino-acid chain: Quinolinate synthase (301 aa).

2 residues coordinate iminosuccinate: His-21 and Ser-38. Cys-83 serves as a coordination point for [4Fe-4S] cluster. Iminosuccinate-binding positions include 109–111 (YIN) and Ser-126. Residue Cys-169 coordinates [4Fe-4S] cluster. Residues 195-197 (HPE) and Thr-212 contribute to the iminosuccinate site. Residue Cys-257 participates in [4Fe-4S] cluster binding.

It belongs to the quinolinate synthase family. Type 2 subfamily. [4Fe-4S] cluster serves as cofactor.

It localises to the cytoplasm. The catalysed reaction is iminosuccinate + dihydroxyacetone phosphate = quinolinate + phosphate + 2 H2O + H(+). Its pathway is cofactor biosynthesis; NAD(+) biosynthesis; quinolinate from iminoaspartate: step 1/1. Its function is as follows. Catalyzes the condensation of iminoaspartate with dihydroxyacetone phosphate to form quinolinate. In Clostridium perfringens (strain SM101 / Type A), this protein is Quinolinate synthase.